We begin with the raw amino-acid sequence, 250 residues long: Peptidyl-tRNA hydrolase (250 aa).

Tyr-14 contributes to the tRNA binding site. Catalysis depends on His-19, which acts as the Proton acceptor. Phe-64, Asn-66, and Asn-112 together coordinate tRNA. The disordered stretch occupies residues 192 to 250 (MGDGNQRPGGVKTDPAQLEKAPPKAQSHIRQARQNQKKPNIPESGPMAEMLKKLLGKKD). A compositionally biased stretch (polar residues) spans 219-229 (HIRQARQNQKK). A compositionally biased stretch (basic and acidic residues) spans 241–250 (MLKKLLGKKD).

It belongs to the PTH family. Monomer.

The protein resides in the cytoplasm. It carries out the reaction an N-acyl-L-alpha-aminoacyl-tRNA + H2O = an N-acyl-L-amino acid + a tRNA + H(+). Functionally, hydrolyzes ribosome-free peptidyl-tRNAs (with 1 or more amino acids incorporated), which drop off the ribosome during protein synthesis, or as a result of ribosome stalling. Catalyzes the release of premature peptidyl moieties from peptidyl-tRNA molecules trapped in stalled 50S ribosomal subunits, and thus maintains levels of free tRNAs and 50S ribosomes. This Brucella canis (strain ATCC 23365 / NCTC 10854 / RM-666) protein is Peptidyl-tRNA hydrolase.